The following is a 544-amino-acid chain: Major royal jelly protein 3 (544 aa).

An N-terminal signal peptide occupies residues 1–20 (MTKWLLLVVCLGIACQDVTS). N183 carries an N-linked (GlcNAc...) asparagine glycan. Residues 421 to 544 (RYHNQNAGNQ…NQVHHSSKLH (124 aa)) are disordered. A run of 20 repeats spans residues 424–428 (NQNAG), 429–433 (NQNAD), 434–438 (NQNAD), 439–443 (NQNAN), 444–448 (NQNAD), 449–453 (NQNAN), 454–458 (KQNGN), 459–463 (RQNDN), 464–468 (RQNDN), 469–473 (KQNGN), 474–478 (RQNDN), 479–483 (KQNGN), 484–488 (RQNDN), 489–493 (KQNGN), 494–498 (RQNGN), 499–503 (KQNDN), 504–508 (KQNGN), 509–513 (RQNDN), 514–518 (KRNGN), and 519–523 (RQNDN). Low complexity-rich tracts occupy residues 424–460 (NQNAGNQNADNQNADNQNANNQNADNQNANKQNGNRQ), 468–510 (NKQN…GNRQ), and 518–530 (NRQNDNQNNQNDN). The interval 424-523 (NQNAGNQNAD…KRNGNRQNDN (100 aa)) is 23 X 5 AA tandem repeats of [NKR]-[RQ]-N-[AGD]-[DNG]. Residues 524-525 (QN) form a 21; half-length repeat. A run of 2 repeats spans residues 526–530 (NQNDN) and 531–535 (NRNDN).

It belongs to the major royal jelly protein family. Homoligomer; in the absence of RNA, assembles into a higher-order oligomeric form, composed of around 20 monomer units. In terms of tissue distribution, found in and secreted from the hypopharyngeal glands of the worker honey bee (at protein level); expression peaks at 12 days post eclosion. Expressed in the brains of worker bees. Expressed in the brains of adult worker bees peaking at 12 days post eclosion (at protein level). Expressed in the spermatheca of adult queen bees (at protein level); Expression levels are higher in mated queens than in virgin queens. Expressed in queen bee ovaries and male drone testes. Expression in the head of forager worker bees is lower than in the heads of nurse worker bees.

The protein resides in the secreted. In terms of biological role, abundant protein component of royal jelly, a substance produced in the hypopharyngeal gland containing proteins, free amino acids, fatty acids, sugars and other nutrients, which is fed to developing larvae by worker nurse bees. Major royal jelly proteins (MRJPs) are high in essential amino acids and probably have a nutritional function in larval food. All larvae are fed some royal jelly (also known as worker jelly) early in their development but it forms the principal source of nutrition for larvae destined to become queen bees. Secreted RNA-binding protein required to concentrate, stabilize and enhance environmental RNA bioavailability in the honey bee royal jelly. Acts as a RNA-aggregating protein: binds 18 nucleotides and longer single- and double-stranded RNA (ssRNA and dsRNA, respectively) in a non-specific manner. RNA-binding drives super-order assembly of oligomers into extracellular ribonucleoprotein granules that concentrate, protect and enhance RNA uptake granules, facilitating RNA transfer among bees. Produced in the spermatheca of adult queen bees, along with other major royal jelly proteins, where it may act as a nutrient supply for sperm stored by mated queens, or be involved in energy metabolism. This Apis mellifera (Honeybee) protein is Major royal jelly protein 3.